A 145-amino-acid polypeptide reads, in one-letter code: D-aminoacyl-tRNA deacylase (145 aa).

The short motif at 137–138 (GP) is the Gly-cisPro motif, important for rejection of L-amino acids element.

It belongs to the DTD family. Homodimer.

The protein localises to the cytoplasm. The enzyme catalyses glycyl-tRNA(Ala) + H2O = tRNA(Ala) + glycine + H(+). The catalysed reaction is a D-aminoacyl-tRNA + H2O = a tRNA + a D-alpha-amino acid + H(+). An aminoacyl-tRNA editing enzyme that deacylates mischarged D-aminoacyl-tRNAs. Also deacylates mischarged glycyl-tRNA(Ala), protecting cells against glycine mischarging by AlaRS. Acts via tRNA-based rather than protein-based catalysis; rejects L-amino acids rather than detecting D-amino acids in the active site. By recycling D-aminoacyl-tRNA to D-amino acids and free tRNA molecules, this enzyme counteracts the toxicity associated with the formation of D-aminoacyl-tRNA entities in vivo and helps enforce protein L-homochirality. This Carboxydothermus hydrogenoformans (strain ATCC BAA-161 / DSM 6008 / Z-2901) protein is D-aminoacyl-tRNA deacylase.